The chain runs to 263 residues: MKLKSFGVFGNPIKHSKSPLIHNACFLTFQKKLGFLGHYHPILLPLESHIKNEFLHLGLSGANVTLPFKERAFQICDKIKGIALECGAVNTLVLENDELVGYNTDALGFYLSLKQKNYQNALILGSGGSAKALACELKKQGLEVSVLNRSARGLDFFQRLGCDCFMEPPKSAFDLIINATSASLNNELPLNKEVLKGYFKEGQLAYDLAYGFLTPFLSLAKELEIPFQDGKDMLIYQAALSFEKFSASQIPYSKAFEVMRSVF.

Shikimate-binding positions include Ser16–Ser18 and Thr65. Lys69 (proton acceptor) is an active-site residue. Shikimate is bound by residues Asn90 and Asp105. NADP(+) is bound by residues Gly125–Ser129 and Leu208. Tyr210 serves as a coordination point for shikimate. Position 230 (Gly230) interacts with NADP(+).

Belongs to the shikimate dehydrogenase family. Homodimer.

The catalysed reaction is shikimate + NADP(+) = 3-dehydroshikimate + NADPH + H(+). It functions in the pathway metabolic intermediate biosynthesis; chorismate biosynthesis; chorismate from D-erythrose 4-phosphate and phosphoenolpyruvate: step 4/7. Involved in the biosynthesis of the chorismate, which leads to the biosynthesis of aromatic amino acids. Catalyzes the reversible NADPH linked reduction of 3-dehydroshikimate (DHSA) to yield shikimate (SA). This chain is Shikimate dehydrogenase (NADP(+)), found in Helicobacter pylori (strain P12).